We begin with the raw amino-acid sequence, 284 residues long: Nucleotide-binding protein TTE1834 (284 aa).

ATP is bound at residue 8 to 15 (GLSGAGKT). 58–61 (DLRG) is a binding site for GTP.

It belongs to the RapZ-like family.

Its function is as follows. Displays ATPase and GTPase activities. The chain is Nucleotide-binding protein TTE1834 from Caldanaerobacter subterraneus subsp. tengcongensis (strain DSM 15242 / JCM 11007 / NBRC 100824 / MB4) (Thermoanaerobacter tengcongensis).